We begin with the raw amino-acid sequence, 221 residues long: MKYKPVHRFDMSPKDMIKVQKQLAKEVKLIHFSDEPNLVSGVDLSFPKDEGLAVIVTMDFKKLSVIDVTYAVDKITLPYIPGLLAFRELPIFLKAWEKLEIEPDIVFFDGQGYAHPRRMGIATHASFFIEKPTIGIAKSKLIGEYEEPGKKKGEFTFLYHKDEKIGIVLRTRDNVKPVFVSPGNLVDFNNALDFTYHFATKYKIPEITRKAHLYTQSLKQR.

Residues Asp43 and Asp109 each coordinate Mg(2+).

The protein belongs to the endonuclease V family. Mg(2+) is required as a cofactor.

Its subcellular location is the cytoplasm. It catalyses the reaction Endonucleolytic cleavage at apurinic or apyrimidinic sites to products with a 5'-phosphate.. Its function is as follows. DNA repair enzyme involved in the repair of deaminated bases. Selectively cleaves double-stranded DNA at the second phosphodiester bond 3' to a deoxyinosine leaving behind the intact lesion on the nicked DNA. The sequence is that of Endonuclease V from Petrotoga mobilis (strain DSM 10674 / SJ95).